Reading from the N-terminus, the 614-residue chain is Aspartate--tRNA ligase (614 aa).

Glu174 is an L-aspartate binding site. An aspartate region spans residues Gln198–Lys201. Arg220 is a binding site for L-aspartate. ATP-binding positions include Arg220–Glu222 and Gln229. L-aspartate is bound at residue His448. Residue Glu482 participates in ATP binding. Arg489 serves as a coordination point for L-aspartate. Gly534 to Arg537 provides a ligand contact to ATP.

It belongs to the class-II aminoacyl-tRNA synthetase family. Type 1 subfamily. In terms of assembly, homodimer.

It localises to the cytoplasm. The enzyme catalyses tRNA(Asp) + L-aspartate + ATP = L-aspartyl-tRNA(Asp) + AMP + diphosphate. Functionally, catalyzes the attachment of L-aspartate to tRNA(Asp) in a two-step reaction: L-aspartate is first activated by ATP to form Asp-AMP and then transferred to the acceptor end of tRNA(Asp). This chain is Aspartate--tRNA ligase, found in Lactobacillus acidophilus (strain ATCC 700396 / NCK56 / N2 / NCFM).